Here is a 231-residue protein sequence, read N- to C-terminus: Aspartate/glutamate leucyltransferase (231 aa).

This sequence belongs to the R-transferase family. Bpt subfamily.

The protein resides in the cytoplasm. It catalyses the reaction N-terminal L-glutamyl-[protein] + L-leucyl-tRNA(Leu) = N-terminal L-leucyl-L-glutamyl-[protein] + tRNA(Leu) + H(+). It carries out the reaction N-terminal L-aspartyl-[protein] + L-leucyl-tRNA(Leu) = N-terminal L-leucyl-L-aspartyl-[protein] + tRNA(Leu) + H(+). Functionally, functions in the N-end rule pathway of protein degradation where it conjugates Leu from its aminoacyl-tRNA to the N-termini of proteins containing an N-terminal aspartate or glutamate. The polypeptide is Aspartate/glutamate leucyltransferase (Pseudoalteromonas atlantica (strain T6c / ATCC BAA-1087)).